Reading from the N-terminus, the 790-residue chain is Lysine biosynthesis regulatory protein LYS14 (790 aa).

Disordered regions lie at residues Met1–Glu50 and Phe72–Asn157. Positions Ser35–Ser47 are enriched in low complexity. 2 stretches are compositionally biased toward polar residues: residues Lys75–Asp113 and Thr120–Val142. Residues Cys159–Cys186 constitute a DNA-binding region (zn(2)-C6 fungal-type). Residues Lys195 to Asn258 are disordered. Residues Ala222–Arg239 show a composition bias toward basic residues.

The protein localises to the nucleus. In terms of biological role, activates the transcription of lysine biosynthesis genes. This activation is dependent on the inducer alpha-aminoadipate semialdehyde and repressed by lysine. In Saccharomyces cerevisiae (strain ATCC 204508 / S288c) (Baker's yeast), this protein is Lysine biosynthesis regulatory protein LYS14 (LYS14).